The following is a 490-amino-acid chain: Bifunctional protein HldE (490 aa).

Positions 1–330 are ribokinase; sequence MFDFDDLSQA…RKILPHAYRA (330 aa). 205–208 contacts ATP; the sequence is NRKE. Residue Asp275 is part of the active site. The tract at residues 358 to 490 is cytidylyltransferase; that stretch reads FTNGCFDILH…LVDRARSDQR (133 aa).

It in the N-terminal section; belongs to the carbohydrate kinase PfkB family. The protein in the C-terminal section; belongs to the cytidylyltransferase family. Homodimer.

It carries out the reaction D-glycero-beta-D-manno-heptose 7-phosphate + ATP = D-glycero-beta-D-manno-heptose 1,7-bisphosphate + ADP + H(+). The enzyme catalyses D-glycero-beta-D-manno-heptose 1-phosphate + ATP + H(+) = ADP-D-glycero-beta-D-manno-heptose + diphosphate. It functions in the pathway nucleotide-sugar biosynthesis; ADP-L-glycero-beta-D-manno-heptose biosynthesis; ADP-L-glycero-beta-D-manno-heptose from D-glycero-beta-D-manno-heptose 7-phosphate: step 1/4. The protein operates within nucleotide-sugar biosynthesis; ADP-L-glycero-beta-D-manno-heptose biosynthesis; ADP-L-glycero-beta-D-manno-heptose from D-glycero-beta-D-manno-heptose 7-phosphate: step 3/4. Its function is as follows. Catalyzes the phosphorylation of D-glycero-D-manno-heptose 7-phosphate at the C-1 position to selectively form D-glycero-beta-D-manno-heptose-1,7-bisphosphate. Functionally, catalyzes the ADP transfer from ATP to D-glycero-beta-D-manno-heptose 1-phosphate, yielding ADP-D-glycero-beta-D-manno-heptose. This chain is Bifunctional protein HldE, found in Bradyrhizobium sp. (strain ORS 278).